We begin with the raw amino-acid sequence, 94 residues long: UPF0358 protein Bcer98_2651 (94 aa).

Belongs to the UPF0358 family.

The protein is UPF0358 protein Bcer98_2651 of Bacillus cytotoxicus (strain DSM 22905 / CIP 110041 / 391-98 / NVH 391-98).